Consider the following 189-residue polypeptide: Effector protein NleF (189 aa).

Positions 186-189 (LQCG) are interaction with host caspases.

As to quaternary structure, monomer. Interacts (via C-terminus) with human CASP4, CASP8 and CASP9.

It localises to the secreted. It is found in the host cytoplasm. Effector protein that alters host cell physiology and promotes bacterial survival in host tissues. Inhibits the catalytic activity of human CASP4, CASP8 and CASP9, and thereby inhibits apoptosis of infected host cells. The polypeptide is Effector protein NleF (nleF) (Escherichia coli O157:H7).